Reading from the N-terminus, the 647-residue chain is Carboxypeptidase Z (647 aa).

An N-terminal signal peptide occupies residues 1 to 18 (MVPSLLLLLTGLFRATEP). The FZ domain maps to 35 to 157 (AQKAKCVDIS…AGEEEGCFDP (123 aa)). Cystine bridges form between Cys40–Cys106, Cys48–Cys99, Cys90–Cys126, Cys115–Cys154, and Cys119–Cys143. The 317-residue stretch at 183 to 499 (KHHSYSQMVS…DALLNYMEMV (317 aa)) folds into the Peptidase M14 domain. The Zn(2+) site is built by His245 and Glu248. N-linked (GlcNAc...) asparagine glycosylation is present at Asn278. His377 provides a ligand contact to Zn(2+). Residue Glu469 is the Proton donor/acceptor of the active site.

Belongs to the peptidase M14 family. In terms of assembly, interacts with WNT4 vie its FZ domain. Requires Zn(2+) as cofactor. In the early embryo it is initially expressed throughout the somites and subsequently becomes restricted to the sclerotome. Expressed in somites, paraxial head mesoderm and apical ectodermal ridge.

It is found in the secreted. It localises to the extracellular space. The protein resides in the extracellular matrix. Its activity is regulated as follows. Inhibited by 2-mercaptomethyl-3-guanidinoethylthiopropanoic acid (MGTA) and guanidinoethylmercaptosuccinic acid (GEMSA). Inhibited by chelating agents such as EDTA and EGTA. Functionally, cleaves substrates with C-terminal arginine residues. Modulates the Wnt signaling pathway, probably by cleaving some undefined protein. Regulates the development of skeletal elements during development, probably by activating WNT4. This Gallus gallus (Chicken) protein is Carboxypeptidase Z (CPZ).